Consider the following 220-residue polypeptide: Response regulator ArlR (220 aa).

One can recognise a Response regulatory domain in the interval 3-116 (KILIVEDEQN…ELLARIRAML (114 aa)). 4-aspartylphosphate is present on Asp-52. The segment at residues 122–220 (KNLIDIKGII…VRGVGYVVRQ (99 aa)) is a DNA-binding region (ompR/PhoB-type).

Phosphorylated by ArlS.

It localises to the cytoplasm. In terms of biological role, member of the two-component regulatory system ArlS/ArlR. The sequence is that of Response regulator ArlR (arlR) from Staphylococcus saprophyticus subsp. saprophyticus (strain ATCC 15305 / DSM 20229 / NCIMB 8711 / NCTC 7292 / S-41).